Here is a 190-residue protein sequence, read N- to C-terminus: Shikimate kinase (190 aa).

14–19 (GAGKST) lines the ATP pocket. Ser-18 lines the Mg(2+) pocket. Substrate contacts are provided by Asp-36, Arg-60, and Gly-82. Arg-120 provides a ligand contact to ATP. Arg-139 contacts substrate.

It belongs to the shikimate kinase family. In terms of assembly, monomer. It depends on Mg(2+) as a cofactor.

The protein localises to the cytoplasm. It catalyses the reaction shikimate + ATP = 3-phosphoshikimate + ADP + H(+). Its pathway is metabolic intermediate biosynthesis; chorismate biosynthesis; chorismate from D-erythrose 4-phosphate and phosphoenolpyruvate: step 5/7. Catalyzes the specific phosphorylation of the 3-hydroxyl group of shikimic acid using ATP as a cosubstrate. This is Shikimate kinase from Thioalkalivibrio sulfidiphilus (strain HL-EbGR7).